We begin with the raw amino-acid sequence, 109 residues long: Large ribosomal subunit protein uL22 (109 aa).

It belongs to the universal ribosomal protein uL22 family. As to quaternary structure, part of the 50S ribosomal subunit.

In terms of biological role, this protein binds specifically to 23S rRNA; its binding is stimulated by other ribosomal proteins, e.g. L4, L17, and L20. It is important during the early stages of 50S assembly. It makes multiple contacts with different domains of the 23S rRNA in the assembled 50S subunit and ribosome. Its function is as follows. The globular domain of the protein is located near the polypeptide exit tunnel on the outside of the subunit, while an extended beta-hairpin is found that lines the wall of the exit tunnel in the center of the 70S ribosome. The chain is Large ribosomal subunit protein uL22 from Neisseria gonorrhoeae (strain ATCC 700825 / FA 1090).